The chain runs to 218 residues: Ribosomal RNA small subunit methyltransferase J (218 aa).

S-adenosyl-L-methionine-binding positions include 55–56, 71–72, and D123; these read RD and ER.

Belongs to the methyltransferase superfamily. RsmJ family.

It localises to the cytoplasm. It carries out the reaction guanosine(1516) in 16S rRNA + S-adenosyl-L-methionine = N(2)-methylguanosine(1516) in 16S rRNA + S-adenosyl-L-homocysteine + H(+). Functionally, specifically methylates the guanosine in position 1516 of 16S rRNA. This chain is Ribosomal RNA small subunit methyltransferase J, found in Rhodopseudomonas palustris (strain HaA2).